The primary structure comprises 398 residues: Immunoglobulin heavy constant alpha 1 (398 aa).

The Extracellular portion of the chain corresponds to 1 to 364; the sequence is ASPTSPKVFP…TPGANLWPTT (364 aa). An Ig-like 1 domain is found at 6 to 98; the sequence is PKVFPLSLCS…HYTNPSQDVT (93 aa). 2 disulfides stabilise this stretch: Cys-26–Cys-85 and Cys-77–Cys-101. The tract at residues 96-122 is disordered; it reads DVTVPCPVPSTPPTPSPSTPPTPSPSC. The span at 101-119 shows a compositional bias: pro residues; the sequence is CPVPSTPPTPSPSTPPTPS. Ser-105 carries an O-linked (GalNAc...) serine glycan. Thr-106 and Thr-109 each carry an O-linked (GalNAc...) threonine glycan. O-linked (GalNAc...) serine glycans are attached at residues Ser-111 and Ser-113. Thr-114 and Thr-117 each carry an O-linked (GalNAc...) threonine glycan. O-linked (GalNAc...) serine glycans are attached at residues Ser-119 and Ser-121. Intrachain disulfides connect Cys-123-Cys-180, Cys-147-Cys-204, and Cys-250-Cys-313. Ig-like domains lie at 125 to 220 and 228 to 330; these read PRLS…ATLS and PEVH…KTID. Asn-144 carries an N-linked (GlcNAc...) (complex) asparagine glycan. Pro-340 carries an N-linked (GlcNAc...) (complex) asparagine glycan. Glu-352 contacts 3-hydroxy-L-kynurenine. The chain crosses the membrane as a helical span at residues 365-383; it reads ITFLTLFLLSLFYSTALTV. Residues 384 to 398 lie on the Cytoplasmic side of the membrane; it reads TSVRGPSGNREGPQY.

In terms of assembly, immunoglobulins are composed of two identical heavy chains and two identical light chains; disulfide-linked. Monomeric or polymeric. Part of the secretory IgA (sIgA) complex that consists of two, four or five IgA monomers, and two additional non-Ig polypeptides, namely the JCHAIN and the secretory component (the proteolytic product of PIGR). In terms of processing, 3-Hydroxykynurenine, an oxidized tryptophan metabolite that is common in biological fluids, reacts with alpha-1-microglobulin to form heterogeneous polycyclic chromophores including hydroxanthommatin. The chromophore reacts with accessible cysteines forming non-reducible thioether cross-links with Ig alpha-1 chain C region Cys-352. Post-translationally, N- and O-glycosylated. N-glycan at Asn-144: Hex5HexNAc4.

The protein localises to the secreted. It localises to the cell membrane. In terms of biological role, constant region of immunoglobulin heavy chains. Immunoglobulins, also known as antibodies, are membrane-bound or secreted glycoproteins produced by B lymphocytes. In the recognition phase of humoral immunity, the membrane-bound immunoglobulins serve as receptors which, upon binding of a specific antigen, trigger the clonal expansion and differentiation of B lymphocytes into immunoglobulins-secreting plasma cells. Secreted immunoglobulins mediate the effector phase of humoral immunity, which results in the elimination of bound antigens. The antigen binding site is formed by the variable domain of one heavy chain, together with that of its associated light chain. Thus, each immunoglobulin has two antigen binding sites with remarkable affinity for a particular antigen. The variable domains are assembled by a process called V-(D)-J rearrangement and can then be subjected to somatic hypermutations which, after exposure to antigen and selection, allow affinity maturation for a particular antigen. Ig alpha is the major immunoglobulin class in body secretions. The chain is Immunoglobulin heavy constant alpha 1 from Homo sapiens (Human).